The chain runs to 279 residues: ATP-dependent Clp protease proteolytic subunit-related protein 2, chloroplastic (279 aa).

The N-terminal 54 residues, 1 to 54 (MAVSFNTTLHQPSLSPSCSIKLYSGLKPQSASFLASGYQNLNKEFYGRVYKSLQ), are a transit peptide targeting the chloroplast.

This sequence belongs to the peptidase S14 family. In terms of assembly, component of the chloroplastic Clp protease core complex which consist of at least 16 proteins: CLPP4 (3 copies), CLPP5 (3 copies), CLPR4 (2 copies), ClpP1 (1 copy), CLPP6 (1 copy), CLPR2 (1 copy), CLPT1 (1 copy), CLPT2 (1 copy) and 3 copies of CLPP3 and/or CLPR1 and/or CLPR3. The core complex is organized in two heptameric rings, one containing CLPP3,4,5,6 in a 1:2:3:1 ratio and the other CLPP1 and CLPR1,2,3,4 in a 3:1:1:1:1 ratio. As to expression, expressed at least in leaves and roots.

It is found in the plastid. The protein localises to the chloroplast. Its function is as follows. Required for chloroplast development and integrity. Involved in the regulation of plastoglobules formation. The sequence is that of ATP-dependent Clp protease proteolytic subunit-related protein 2, chloroplastic from Arabidopsis thaliana (Mouse-ear cress).